We begin with the raw amino-acid sequence, 300 residues long: Flaviolin linalyltransferase (300 aa).

The protein belongs to the aromatic prenyltransferase family. As to quaternary structure, monomer.

The catalysed reaction is flaviolin + (2E)-geranyl diphosphate = 3-linalylflaviolin + diphosphate. With respect to regulation, does not require magnesium or any other divalent metal ions for activity. Involved in the biosynthesis of furanonaphthoquinone I (FNQ I). Catalyzes C- and O-prenylations of different phenolic substrates. With flaviolin as substrate, catalyzes the formation of a carbon-carbon-bond between C-3 (rather than C-1) of geranyl diphosphate and C-3 of flaviolin. With 1,3-dihydroxynaphthalene and 4-hydroxybenzoate as substrates, catalyzes O-prenylations. In Streptomyces virginiae (Streptomyces cinnamonensis), this protein is Flaviolin linalyltransferase.